We begin with the raw amino-acid sequence, 256 residues long: 5-keto-4-deoxy-D-glucarate aldolase (256 aa).

The active-site Proton acceptor is the H50. Q151 provides a ligand contact to substrate. E153 provides a ligand contact to Mg(2+). Substrate-binding residues include S178 and D179. D179 lines the Mg(2+) pocket.

The protein belongs to the HpcH/HpaI aldolase family. KDGluc aldolase subfamily. As to quaternary structure, homohexamer; trimer of dimers. Requires Mg(2+) as cofactor.

The enzyme catalyses 5-dehydro-4-deoxy-D-glucarate = 2-hydroxy-3-oxopropanoate + pyruvate. The catalysed reaction is 2-dehydro-3-deoxy-D-glucarate = 2-hydroxy-3-oxopropanoate + pyruvate. The protein operates within carbohydrate acid metabolism; galactarate degradation; D-glycerate from galactarate: step 2/3. Catalyzes the reversible retro-aldol cleavage of both 5-keto-4-deoxy-D-glucarate and 2-keto-3-deoxy-D-glucarate to pyruvate and tartronic semialdehyde. This chain is 5-keto-4-deoxy-D-glucarate aldolase, found in Salmonella gallinarum (strain 287/91 / NCTC 13346).